A 289-amino-acid polypeptide reads, in one-letter code: uncharacterized protein (289 aa).

Residues 1-20 show a composition bias toward basic and acidic residues; the sequence is MNPMDRQTEGQEPQHQDRQP. Positions 1 to 39 are disordered; sequence MNPMDRQTEGQEPQHQDRQPGIESKMNPLPLSEDEDYRG. 49-73 contacts NADP(+); sequence IITGGDSGIGRAAAIAFAKEGADIS. Serine 181 lines the substrate pocket. The Proton acceptor role is filled by tyrosine 194.

Belongs to the short-chain dehydrogenases/reductases (SDR) family.

This is an uncharacterized protein from Bacillus subtilis (strain 168).